We begin with the raw amino-acid sequence, 1023 residues long: Sodium/potassium-transporting ATPase subunit alpha-1 (1023 aa).

The propeptide occupies 1–5 (MGYGA). Positions 1–11 (MGYGAGRDKYE) are enriched in basic and acidic residues. The tract at residues 1–34 (MGYGAGRDKYEPAATSEHGGKKGKGKGKDRDMEE) is disordered. At 6–87 (GRDKYEPAAT…NALTPPPTTP (82 aa)) the chain is on the cytoplasmic side. Residue T15 is modified to Phosphothreonine; by PKC. S16 is modified (phosphoserine; by PKC). An interaction with phosphoinositide-3 kinase region spans residues 82–84 (PPP). Residues 88–108 (EWVKFCRQLFGGFSMLLWIGA) form a helical membrane-spanning segment. At 109–131 (ILCFLAYGIRKASDLEPDNDNLY) the chain is on the extracellular side. A helical membrane pass occupies residues 132–152 (LGVVLSAVVIITGCFSYYQEA). Over 153 to 288 (KSSRIMESFK…GGQTPIAVEI (136 aa)) the chain is Cytoplasmic. Residues 215 to 235 (NSSLTGESEPQTRSPDFTNEN) form a disordered region. Residues 289–308 (GHFIHIITGVAVFLGVSFFI) traverse the membrane as a helical segment. The Extracellular portion of the chain corresponds to 309 to 320 (LSLILHYTWLEA). A helical membrane pass occupies residues 321–338 (VIFLIGIIVANVPEGLLA). Over 339 to 772 (TVTVCLTLTA…EEGRLIFDNL (434 aa)) the chain is Cytoplasmic. The active-site 4-aspartylphosphate intermediate is the D376. Residue K487 participates in ATP binding. Mg(2+) contacts are provided by D717 and D721. A helical membrane pass occupies residues 773 to 792 (KKSIAYTLTSNIPEITPFLI). Over 793–802 (FIIADIPLPL) the chain is Extracellular. Residues 803-823 (GTVTILCIDLGTDMVPAISLA) traverse the membrane as a helical segment. Over 824-843 (YEQAESDIMKRQPRNPKKDK) the chain is Cytoplasmic. Residues 844–866 (LVNERLISMAYGQIGMIQALGGF) traverse the membrane as a helical segment. The Extracellular portion of the chain corresponds to 867-918 (FAYFVILAENGFLPSTLLGIRVAWEDRYVNDVEDSYGQQWTYEQRKIVEFTC). The chain crosses the membrane as a helical span at residues 919 to 938 (HTAFFVSIVVVQWADLIICK). Residues 939 to 951 (TRRNSVFQQGMKN) lie on the Cytoplasmic side of the membrane. S943 bears the Phosphoserine; by PKA mark. The helical transmembrane segment at 952–970 (KILIFGLFEETALAAFLSY) threads the bilayer. Residues 971-985 (CPGMDVALRMYPLKP) are Extracellular-facing. Residues 986–1006 (TWWFCAFPYSLLIFIYDEVRK) traverse the membrane as a helical segment. At 1007-1023 (LILRRSPGGWVEKETYY) the chain is on the cytoplasmic side.

It belongs to the cation transport ATPase (P-type) (TC 3.A.3) family. Type IIC subfamily. The sodium/potassium-transporting ATPase is composed of a catalytic alpha subunit, an auxiliary non-catalytic beta subunit and an additional regulatory subunit. In terms of tissue distribution, mainly expressed in kidney. Found in bladder, colon, eye, and testis. Found in low levels in brain, heart, spleen and liver.

The protein localises to the cell membrane. The protein resides in the sarcolemma. It carries out the reaction K(+)(out) + Na(+)(in) + ATP + H2O = K(+)(in) + Na(+)(out) + ADP + phosphate + H(+). Its activity is regulated as follows. This alpha subunit is resistant to ouabain. This is the catalytic component of the active enzyme, which catalyzes the hydrolysis of ATP coupled with the exchange of sodium and potassium ions across the plasma membrane. This action creates the electrochemical gradient of sodium and potassium ions, providing the energy for active transport of various nutrients. This chain is Sodium/potassium-transporting ATPase subunit alpha-1 (ATP1A1), found in Rhinella marina (Cane toad).